Reading from the N-terminus, the 325-residue chain is mRNA decay activator protein ZFP36 (325 aa).

Residues 1–15 (MDLAAIYKSLLSLSP) form a necessary for nuclear export region. The segment at 1 to 98 (MDLAAIYKSL…PTSPTATPTT (98 aa)) is necessary and sufficient for the association with mRNA decay enzymes and mRNA decay activation. 2 necessary for localization of ARE-containing mRNAs to processing bodies (PBs) regions span residues 1 to 172 (MDLA…DLAA) and 98 to 325 (TSSR…SVSE). The span at 15 to 48 (PELPSDLGETESSTSWASSGPWSLSSSDSSLPEA) shows a compositional bias: low complexity. The segment at 15–101 (PELPSDLGET…PTATPTTSSR (87 aa)) is disordered. Serine 58 carries the post-translational modification Phosphoserine; by MAPKAPK2. Serine 64 carries the phosphoserine modification. The stretch at 69 to 73 (PPPPG) is one P-P-P-P-G repeat. Residues 75–101 (APLAPRPSSELSPSPTSPTATPTTSSR) are compositionally biased toward low complexity. Residues serine 86 and serine 88 each carry the phosphoserine modification. Residue threonine 90 is modified to Phosphothreonine. Serine 91 bears the Phosphoserine mark. The segment at 93-166 (TATPTTSSRY…GSRCHFIHNP (74 aa)) is necessary for nuclear localization. The tract at residues 95–171 (TPTTSSRYKT…FIHNPSEDLA (77 aa)) is necessary for RNA-binding. 2 C3H1-type zinc fingers span residues 101–129 (RYKTELCRTFSESGRCRYGAKCQFAHGLG) and 139–167 (KYKTELCHKFYLQGRCPYGSRCHFIHNPS). Positions 101-192 (RYKTELCRTF…ISFSGLPSGR (92 aa)) are necessary for interaction with PABPN1. Serine 167 is modified (phosphoserine). The segment at 172-325 (APGHPHVLRQ…PIFNRISVSE (154 aa)) is necessary for mRNA decay activation. Position 184 is a phosphoserine; by MAPKAPK2 (serine 184). Disordered regions lie at residues 185 to 248 (FSGL…TPAC) and 260 to 325 (VWGP…SVSE). Residue serine 195 is modified to Phosphoserine. The stretch at 196–200 (PPPAS) is one P-P-P-P-G repeat. Over residues 204–214 (PSVPSWSFSPS) the composition is skewed to low complexity. Residue serine 216 is modified to Phosphoserine. The P-P-P-P-G repeat unit spans residues 217-222 (PPPPPG). A Phosphoserine; by MAPK1; in vitro modification is found at serine 227. Phosphoserine occurs at positions 275, 295, and 322. Positions 285-295 (SSGSSLGGSDS) are enriched in low complexity. Residues 311–325 (APRRLPIFNRISVSE) form an interaction with CNOT1 region.

As to quaternary structure, associates with cytoplasmic CCR4-NOT and PAN2-PAN3 deadenylase complexes to trigger ARE-containing mRNA deadenylation and decay processes. Part of a mRNA decay activation complex at least composed of poly(A)-specific exoribonucleases CNOT6, EXOSC2 and XRN1 and mRNA-decapping enzymes DCP1A and DCP2. Associates with the RNA exosome complex. Interacts (via phosphorylated form) with 14-3-3 proteins; these interactions promote exclusion of ZFP36 from cytoplasmic stress granules in response to arsenite treatment in a MAPKAPK2-dependent manner and does not prevent CCR4-NOT deadenylase complex recruitment or ZFP36-induced ARE-containing mRNA deadenylation and decay processes. Interacts with 14-3-3 proteins; these interactions occur in response to rapamycin in an Akt-dependent manner. Interacts with AGO2 and AGO4. Interacts (via C-terminus) with CNOT1; this interaction occurs in a RNA-independent manner and induces mRNA deadenylation. Interacts (via N-terminus) with CNOT6. Interacts with CNOT6L. Interacts (via C-terminus) with CNOT7; this interaction occurs in a RNA-independent manner, induces mRNA deadenylation and is inhibited in a phosphorylation MAPKAPK2-dependent manner. Interacts (via unphosphorylated form) with CNOT8; this interaction occurs in a RNA-independent manner and is inhibited in a phosphorylation MAPKAPK2-dependent manner. Interacts with DCP1A. Interacts (via N-terminus) with DCP2. Interacts with EDC3. Interacts (via N-terminus) with EXOSC2. Interacts with heat shock 70 kDa proteins. Interacts with KHSRP; this interaction increases upon cytokine-induced treatment. Interacts with MAP3K4; this interaction enhances the association with SH3KBP1/CIN85. Interacts with MAPKAPK2; this interaction occurs upon skeletal muscle satellite cell activation. Interacts with NCL. Interacts with NUP214; this interaction increases upon lipopolysaccharide (LPS) stimulation. Interacts with PABPC1; this interaction occurs in a RNA-dependent manner. Interacts (via hypophosphorylated form) with PABPN1 (via RRM domain and C-terminal arginine-rich region); this interaction occurs in the nucleus in a RNA-independent manner, decreases in presence of single-stranded poly(A) RNA-oligomer and in a p38 MAPK-dependent-manner and inhibits nuclear poly(A) tail synthesis. Interacts with PAN2. Interacts (via C3H1-type zinc finger domains) with PKM. Interacts (via C3H1-type zinc finger domains) with nuclear RNA poly(A) polymerase. Interacts with PPP2CA; this interaction occurs in LPS-stimulated cells and induces ZFP36 dephosphorylation, and hence may promote ARE-containing mRNAs decay. Interacts (via C-terminus) with PRR5L (via C-terminus); this interaction may accelerate ZFP36-mediated mRNA decay during stress. Interacts (via C-terminus) with SFN; this interaction occurs in a phosphorylation-dependent manner. Interacts (via extreme C-terminal region) with SH3KBP1/CIN85 (via SH3 domains); this interaction enhances MAP3K4-induced phosphorylation of ZFP36 at Ser-64 and Ser-91 and does not alter neither ZFP36 binding to ARE-containing transcripts nor TNF-alpha mRNA decay. Interacts with XRN1. Interacts (via C-terminus and Ser-184 phosphorylated form) with YWHAB; this interaction occurs in a p38/MAPKAPK2-dependent manner, increases cytoplasmic localization of ZFP36 and protects ZFP36 from Ser-184 dephosphorylation by serine/threonine phosphatase 2A, and hence may be crucial for stabilizing ARE-containing mRNAs. Interacts (via phosphorylated form) with YWHAE. Interacts (via C-terminus) with YWHAG; this interaction occurs in a phosphorylation-dependent manner. Interacts with YWHAH; this interaction occurs in a phosphorylation-dependent manner. Interacts with YWHAQ; this interaction occurs in a phosphorylation-dependent manner. Interacts with (via C-terminus) YWHAZ; this interaction occurs in a phosphorylation-dependent manner. Does not interact with SH3KBP1. Interacts (via P-P-P-P-G repeats) with GIGYF2; the interaction is direct. In terms of processing, phosphorylated. Phosphorylation at serine and/or threonine residues occurs in a p38 MAPK- and MAPKAPK2-dependent manner. Phosphorylated by MAPKAPK2 at Ser-58 and Ser-184; phosphorylation increases its stability and cytoplasmic localization, promotes binding to 14-3-3 adapter proteins and inhibits the recruitment of cytoplasmic CCR4-NOT and PAN2-PAN3 deadenylase complexes to the mRNA decay machinery, thereby inhibiting ZFP36-induced ARE-containing mRNA deadenylation and decay processes. Phosphorylation by MAPKAPK2 does not impair ARE-containing RNA-binding. Phosphorylated in a MAPKAPK2- and p38 MAPK-dependent manner upon skeletal muscle satellite cell activation; this phosphorylation inhibits ZFP36-mediated mRNA decay activity, and hence stabilizes MYOD1 mRNA. Phosphorylated by MAPK1 upon mitogen stimulation. Phosphorylated at Ser-64 and Ser-91; these phosphorylations increase in a SH3KBP1-dependent manner. Phosphorylated at serine and threonine residues in a pyruvate kinase PKM- and p38 MAPK-dependent manner. Phosphorylation at Ser-58 may participate in the PKM-mediated degradation of ZFP36 in a p38 MAPK-dependent manner. Dephosphorylated by serine/threonine phosphatase 2A at Ser-184. Post-translationally, ubiquitinated; pyruvate kinase (PKM)-dependent ubiquitination leads to proteasomal degradation through a p38 MAPK signaling pathway.

It localises to the nucleus. The protein localises to the cytoplasm. It is found in the cytoplasmic granule. Its subcellular location is the P-body. Its function is as follows. Zinc-finger RNA-binding protein that destabilizes numerous cytoplasmic AU-rich element (ARE)-containing mRNA transcripts by promoting their poly(A) tail removal or deadenylation, and hence provide a mechanism for attenuating protein synthesis. Acts as an 3'-untranslated region (UTR) ARE mRNA-binding adapter protein to communicate signaling events to the mRNA decay machinery. Recruits deadenylase CNOT7 (and probably the CCR4-NOT complex) via association with CNOT1, and hence promotes ARE-mediated mRNA deadenylation. Also functions by recruiting components of the cytoplasmic RNA decay machinery to the bound ARE-containing mRNAs. Self regulates by destabilizing its own mRNA. Binds to 3'-UTR ARE of numerous mRNAs. Also binds to ARE of its own mRNA. Plays a role in anti-inflammatory responses; suppresses tumor necrosis factor (TNF)-alpha production by stimulating ARE-mediated TNF-alpha mRNA decay and several other inflammatory ARE-containing mRNAs in interferon (IFN)- and/or lipopolysaccharide (LPS)-induced macrophages. Also plays a role in the regulation of dendritic cell maturation at the post-transcriptional level, and hence operates as part of a negative feedback loop to limit the inflammatory response. Promotes ARE-mediated mRNA decay of hypoxia-inducible factor HIF1A mRNA during the response of endothelial cells to hypoxia. Positively regulates early adipogenesis of preadipocytes by promoting ARE-mediated mRNA decay of immediate early genes (IEGs). Negatively regulates hematopoietic/erythroid cell differentiation by promoting ARE-mediated mRNA decay of the transcription factor STAT5B mRNA. Plays a role in maintaining skeletal muscle satellite cell quiescence by promoting ARE-mediated mRNA decay of the myogenic determination factor MYOD1 mRNA. Also associates with and regulates the expression of non-ARE-containing target mRNAs at the post-transcriptional level, such as MHC class I mRNAs. Participates in association with argonaute RISC catalytic components in the ARE-mediated mRNA decay mechanism; assists microRNA (miRNA) targeting ARE-containing mRNAs. May also play a role in the regulation of cytoplasmic mRNA decapping; enhances decapping of ARE-containing RNAs, in vitro. Involved in the delivery of target ARE-mRNAs to processing bodies (PBs). In addition to its cytosolic mRNA-decay function, affects nuclear pre-mRNA processing. Negatively regulates nuclear poly(A)-binding protein PABPN1-stimulated polyadenylation activity on ARE-containing pre-mRNA during LPS-stimulated macrophages. Also involved in the regulation of stress granule (SG) and P-body (PB) formation and fusion. Plays a role in the regulation of keratinocyte proliferation, differentiation and apoptosis. Plays a role as a tumor suppressor by inhibiting cell proliferation in breast cancer cells. The protein is mRNA decay activator protein ZFP36 of Ovis aries (Sheep).